The primary structure comprises 179 residues: UPF0227 protein PM0825 (179 aa).

It belongs to the UPF0227 family.

The polypeptide is UPF0227 protein PM0825 (Pasteurella multocida (strain Pm70)).